A 335-amino-acid chain; its full sequence is MIEFQNVHKTYRVAGKDITALHPTSFSIENGQVFGLIGHSGAGKSTLLRLINRLEQSSGGKIIVDGEEVTALDANGLRRFRQQVGMIFQHFNLLASKTVADNVALPLTLAGELSRAEIDQRVAELLARVGLSDHAKKYPAQLSGGQKQRVGIARALATKPKILLCDEATSALDPQTTASVLQLLAEINRELKLTIVLITHEMDVIRRVCDQVGVMDAGVIVEQGSVADVFLHPKHPTTKRFVQESEQIDESEQRDDFAHVPGRIVRLTFQGEATYAPLLGTVARETGVDYSILAGRIDRIKDIPYGQLTLAVTGGDMDAAFARFTAADVHMEVLR.

Positions 2 to 242 (IEFQNVHKTY…PKHPTTKRFV (241 aa)) constitute an ABC transporter domain. 38-45 (GHSGAGKS) provides a ligand contact to ATP.

Belongs to the ABC transporter superfamily. Methionine importer (TC 3.A.1.24) family. In terms of assembly, the complex is composed of two ATP-binding proteins (MetN), two transmembrane proteins (MetI) and a solute-binding protein (MetQ).

Its subcellular location is the cell inner membrane. The enzyme catalyses L-methionine(out) + ATP + H2O = L-methionine(in) + ADP + phosphate + H(+). It catalyses the reaction D-methionine(out) + ATP + H2O = D-methionine(in) + ADP + phosphate + H(+). Functionally, part of the ABC transporter complex MetNIQ involved in methionine import. Responsible for energy coupling to the transport system. In Pseudomonas fluorescens (strain Pf0-1), this protein is Methionine import ATP-binding protein MetN 1.